Here is a 264-residue protein sequence, read N- to C-terminus: Homeobox protein vent1 (264 aa).

Basic and acidic residues-rich tracts occupy residues 16–26 and 44–59; these read KEEATDGKDSM and YAKE…DVQE. Residues 16 to 140 form a disordered region; it reads KEEATDGKDS…RLRTAFTPQQ (125 aa). Polar residues predominate over residues 60–80; sequence HTTSFQCSLGEQVINRPSANP. Over residues 117–130 the composition is skewed to basic and acidic residues; it reads TEQREKSPKSDLQR. Positions 129 to 188 form a DNA-binding region, homeobox; it reads QRRLRTAFTPQQISKLEQAFNKQRYLGAPERKKLATSLQLSEIQVKTWFQNRRMKLKRQI.

In terms of tissue distribution, expressed in the ventral marginal zone of gastrulae. At stage 11.5, also expressed in the ventral region of the animal cap (ectoderm). At the end of gastrulation, predominantly localized to the ventral and lateral regions of the closing slit blastopore. At early tail bud stage, expression is maintained only in the forming proctodeum.

It localises to the nucleus. Functionally, transcriptional repressor. Cooperates with vent2 in a ventral signaling pathway downstream of bmp4, which antagonizes the Spemann organizer and dorsal mesoderm formation, and leads to ventral mesoderm formation. Acts downstream of bmp4 to repress transcription of foxa4-B/XFD-1'. Binds to DNA with preference for the target sequence 5'-CTATT[T/C]G-3'. Also binds 5'-TGCATTTTG-3' at a lower frequency, and occasionally 5'-TTGATC-3'. Binds to the homeobox 2 (HBX2) repressor element in the promoter of the myf5 gene and represses myf5 transcription in the ventral domain. The protein is Homeobox protein vent1 (vent1) of Xenopus laevis (African clawed frog).